Here is a 187-residue protein sequence, read N- to C-terminus: Threonylcarbamoyl-AMP synthase (187 aa).

Residues 4–187 form the YrdC-like domain; the sequence is TLDLDRAVAA…DARSGQILRD (184 aa).

This sequence belongs to the SUA5 family. TsaC subfamily.

It localises to the cytoplasm. It carries out the reaction L-threonine + hydrogencarbonate + ATP = L-threonylcarbamoyladenylate + diphosphate + H2O. Required for the formation of a threonylcarbamoyl group on adenosine at position 37 (t(6)A37) in tRNAs that read codons beginning with adenine. Catalyzes the conversion of L-threonine, HCO(3)(-)/CO(2) and ATP to give threonylcarbamoyl-AMP (TC-AMP) as the acyladenylate intermediate, with the release of diphosphate. This is Threonylcarbamoyl-AMP synthase from Xanthomonas axonopodis pv. citri (strain 306).